The chain runs to 178 residues: Cytochrome b6-f complex iron-sulfur subunit 2 (178 aa).

The chain crosses the membrane as a helical span at residues 17–36 (LLNFFTGAIVATTASAAIYP). In terms of domain architecture, Rieske spans 61-161 (GHPIPASQIL…VQVKDDYIWI (101 aa)). 4 residues coordinate [2Fe-2S] cluster: Cys107, His109, Cys125, and His128. A disulfide bridge connects residues Cys112 and Cys127.

The protein belongs to the Rieske iron-sulfur protein family. The 4 large subunits of the cytochrome b6-f complex are cytochrome b6, subunit IV (17 kDa polypeptide, PetD), cytochrome f and the Rieske protein, while the 4 small subunits are PetG, PetL, PetM and PetN. The complex functions as a dimer. Requires [2Fe-2S] cluster as cofactor.

Its subcellular location is the cellular thylakoid membrane. The catalysed reaction is 2 oxidized [plastocyanin] + a plastoquinol + 2 H(+)(in) = 2 reduced [plastocyanin] + a plastoquinone + 4 H(+)(out). Functionally, component of the cytochrome b6-f complex, which mediates electron transfer between photosystem II (PSII) and photosystem I (PSI), cyclic electron flow around PSI, and state transitions. The polypeptide is Cytochrome b6-f complex iron-sulfur subunit 2 (Nostoc sp. (strain PCC 7120 / SAG 25.82 / UTEX 2576)).